Reading from the N-terminus, the 338-residue chain is Cap-specific mRNA (nucleoside-2'-O-)-methyltransferase (338 aa).

Tyrosine 22 serves as a coordination point for mRNA. 8 residues coordinate S-adenosyl-L-methionine: glutamine 39, tyrosine 66, glycine 68, glycine 72, aspartate 95, arginine 97, valine 116, and aspartate 138. The tract at residues 169-249 (PAASSLKWRC…NKIIRNRIII (81 aa)) is binding to NPH-I. Positions 169–333 (PAASSLKWRC…NTKKSVRGNK (165 aa)) are binding to Rap94. Lysine 175 (for methyltransferase activity) is an active-site residue. MRNA-binding positions include 177-180 (RCPF), aspartate 182, 205-207 (SAE), and glutamate 233. Residues 305 to 338 (HHEPTQRKVPSKNTMLKSRNTKKSVRGNKQGRRT) form a disordered region. Over residues 323-338 (RNTKKSVRGNKQGRRT) the composition is skewed to basic residues.

The protein belongs to the class I-like SAM-binding methyltransferase superfamily. Poxvirus/kinetoplastid 2'-O-MTase family. In terms of assembly, interacts with poly(A) polymerase catalytic subunit OPG063. Interacts with OPG109 and OPG123; these interactions might help linking transcription to capping and polyadenylation.

The protein localises to the virion. It carries out the reaction a 5'-end (N(7)-methyl 5'-triphosphoguanosine)-ribonucleoside in mRNA + S-adenosyl-L-methionine = a 5'-end (N(7)-methyl 5'-triphosphoguanosine)-(2'-O-methyl-ribonucleoside) in mRNA + S-adenosyl-L-homocysteine + H(+). In terms of biological role, displays methyltransferase, positive regulation of the poly(A) polymerase and transcription elongation activities. Involved in the modification of both mRNA ends and in intermediate and late gene positive transcription elongation. At the mRNAs 5' end, methylates the ribose 2' OH group of the first transcribed nucleotide, thereby producing a 2'-O-methylpurine cap. At the 3' end, functions as a processivity factor which stimulates the activity of the viral poly(A) polymerase OPG063 that creates mRNA's poly(A) tail. In the presence of OPG102, OPG063 does not dissociate from the RNA allowing tail elongation to around 250 adenylates. The chain is Cap-specific mRNA (nucleoside-2'-O-)-methyltransferase (OPG102) from Oryctolagus cuniculus (Rabbit).